Reading from the N-terminus, the 196-residue chain is Cilia- and flagella-associated protein 107 (196 aa).

2 mn regions span residues 46–61 (TPQT…FPGH) and 96–108 (ISTY…RHNY). The tract at residues 168-196 (YPRPPAGAMSRREHAIPVPPPRLQPVPHF) is disordered. Pro residues predominate over residues 184–196 (PVPPPRLQPVPHF).

As to quaternary structure, microtubule inner protein component of sperm flagellar doublet microtubules. In terms of tissue distribution, expressed in trachea multiciliated cells.

Its subcellular location is the cytoplasm. It localises to the cytoskeleton. The protein resides in the cilium axoneme. The protein localises to the flagellum axoneme. Microtubule inner protein (MIP) part of the dynein-decorated doublet microtubules (DMTs) in cilia axoneme, which is required for motile cilia beating. This Bos taurus (Bovine) protein is Cilia- and flagella-associated protein 107.